Here is a 354-residue protein sequence, read N- to C-terminus: MSKYWSNITKNIEPYVCGEQPKNKKIIKLNTNENPYPPSPKVLQAIKNAARDDLRLYPDPNCDALRKTIANYYNLSKEEVFIGNGSDEVLALSFLTFFNPEETVVFSDISYSFYPVYANLYKLDYKLAKIREDFSIDINDFKNARGGAVITNPNAPTGVYLSLDSIKQILEDNVNKVVIVDEAYIDFGGESSVNLIKDYPNVLVIQTLSKSRSLAGMRIGFALGQKELIKGLNRIKNSFNSYTIDRISSLAAIEAIKDEEYFKKCTSKVIKTRNWTINELRKIGFKIIPSKANFIFITHDTYQAEDIFIKLKDENVLVRYFNKDRISNYLRVSIGSKEEMEIFMDKIKKIINKL.

Residue Lys-210 is modified to N6-(pyridoxal phosphate)lysine.

It belongs to the class-II pyridoxal-phosphate-dependent aminotransferase family. Histidinol-phosphate aminotransferase subfamily. Homodimer. It depends on pyridoxal 5'-phosphate as a cofactor.

It catalyses the reaction L-histidinol phosphate + 2-oxoglutarate = 3-(imidazol-4-yl)-2-oxopropyl phosphate + L-glutamate. Its pathway is amino-acid biosynthesis; L-histidine biosynthesis; L-histidine from 5-phospho-alpha-D-ribose 1-diphosphate: step 7/9. In Clostridium botulinum (strain Okra / Type B1), this protein is Histidinol-phosphate aminotransferase.